The chain runs to 155 residues: Large ribosomal subunit protein uL15 (155 aa).

The segment covering 1–16 (MVRRFKRAVKYRRGSR) has biased composition (basic residues). The tract at residues 1 to 35 (MVRRFKRAVKYRRGSRTHGWGRVGQHRKSGGSGGK) is disordered.

The protein belongs to the universal ribosomal protein uL15 family. As to quaternary structure, part of the 50S ribosomal subunit.

Its function is as follows. Binds to the 23S rRNA. In Pyrobaculum arsenaticum (strain DSM 13514 / JCM 11321 / PZ6), this protein is Large ribosomal subunit protein uL15.